The sequence spans 793 residues: Phosphoribosylformylglycinamidine synthase subunit PurL (793 aa).

The active site involves histidine 53. The ATP site is built by tyrosine 56 and lysine 95. Glutamate 97 is a Mg(2+) binding site. Substrate-binding positions include 98-101 and arginine 120; that span reads SHNH. Histidine 99 acts as the Proton acceptor in catalysis. Position 121 (aspartate 121) interacts with Mg(2+). Glutamine 244 is a substrate binding site. Aspartate 272 serves as a coordination point for Mg(2+). Substrate is bound at residue 316–318; sequence ESQ. The ATP site is built by aspartate 523 and glycine 560. Asparagine 561 provides a ligand contact to Mg(2+). Serine 563 is a substrate binding site.

The protein belongs to the FGAMS family. As to quaternary structure, monomer. Part of the FGAM synthase complex composed of 1 PurL, 1 PurQ and 2 PurS subunits.

Its subcellular location is the cytoplasm. The catalysed reaction is N(2)-formyl-N(1)-(5-phospho-beta-D-ribosyl)glycinamide + L-glutamine + ATP + H2O = 2-formamido-N(1)-(5-O-phospho-beta-D-ribosyl)acetamidine + L-glutamate + ADP + phosphate + H(+). It functions in the pathway purine metabolism; IMP biosynthesis via de novo pathway; 5-amino-1-(5-phospho-D-ribosyl)imidazole from N(2)-formyl-N(1)-(5-phospho-D-ribosyl)glycinamide: step 1/2. In terms of biological role, part of the phosphoribosylformylglycinamidine synthase complex involved in the purines biosynthetic pathway. Catalyzes the ATP-dependent conversion of formylglycinamide ribonucleotide (FGAR) and glutamine to yield formylglycinamidine ribonucleotide (FGAM) and glutamate. The FGAM synthase complex is composed of three subunits. PurQ produces an ammonia molecule by converting glutamine to glutamate. PurL transfers the ammonia molecule to FGAR to form FGAM in an ATP-dependent manner. PurS interacts with PurQ and PurL and is thought to assist in the transfer of the ammonia molecule from PurQ to PurL. The sequence is that of Phosphoribosylformylglycinamidine synthase subunit PurL from Prochlorococcus marinus (strain SARG / CCMP1375 / SS120).